Here is a 306-residue protein sequence, read N- to C-terminus: Protoheme IX farnesyltransferase (306 aa).

The next 9 membrane-spanning stretches (helical) occupy residues 32–52 (VVQL…PGMP), 57–77 (WALM…AAAF), 108–128 (LLFS…WVNP), 129–149 (LTMW…TVIL), 157–177 (IVIG…AMTG), 183–203 (ALIL…ALAL), 230–250 (VFLY…YGMS), 252–272 (WIYL…GFRL), and 285–305 (FRFS…DHYL).

The protein belongs to the UbiA prenyltransferase family. Protoheme IX farnesyltransferase subfamily.

The protein resides in the cell inner membrane. The catalysed reaction is heme b + (2E,6E)-farnesyl diphosphate + H2O = Fe(II)-heme o + diphosphate. Its pathway is porphyrin-containing compound metabolism; heme O biosynthesis; heme O from protoheme: step 1/1. In terms of biological role, converts heme B (protoheme IX) to heme O by substitution of the vinyl group on carbon 2 of heme B porphyrin ring with a hydroxyethyl farnesyl side group. The polypeptide is Protoheme IX farnesyltransferase (Acidovorax ebreus (strain TPSY) (Diaphorobacter sp. (strain TPSY))).